Here is a 1007-residue protein sequence, read N- to C-terminus: Serine/threonine-protein kinase PRP4 homolog (1007 aa).

A disordered region spans residues 1 to 102 (MAATEPPSLR…LSPAKRTKLD (102 aa)). Alanine 2 is modified (N-acetylalanine). Phosphoserine is present on residues serine 8, serine 21, serine 24, and serine 33. 2 stretches are compositionally biased toward basic residues: residues 40–60 (KHSRHKKKKHKHRSKHKKHKH) and 68–82 (KKHKHKHKHKKHKRK). Positions 83-92 (EVIEASDKEG) are enriched in basic and acidic residues. Serine 88 and serine 94 each carry phosphoserine. An N6-acetyllysine; alternate modification is found at lysine 100. Residue lysine 100 forms a Glycyl lysine isopeptide (Lys-Gly) (interchain with G-Cter in SUMO2); alternate linkage. Residue lysine 112 forms a Glycyl lysine isopeptide (Lys-Gly) (interchain with G-Cter in SUMO2) linkage. Lysine 118 is covalently cross-linked (Glycyl lysine isopeptide (Lys-Gly) (interchain with G-Cter in SUMO2); alternate). Lysine 118 participates in a covalent cross-link: Glycyl lysine isopeptide (Lys-Gly) (interchain with G-Cter in SUMO1); alternate. Serine 132 bears the Phosphoserine mark. The residue at position 141 (tyrosine 141) is a Phosphotyrosine. 2 disordered regions span residues 141 to 535 (YESG…EDEE) and 560 to 583 (NISVPSEPSSPQSSTRSRSPSPDD). Serine 143, serine 145, and serine 167 each carry phosphoserine. Low complexity predominate over residues 158 to 169 (GNRSSTRSSSTR). Residues lysine 171 and lysine 178 each participate in a glycyl lysine isopeptide (Lys-Gly) (interchain with G-Cter in SUMO2) cross-link. Basic residues-rich tracts occupy residues 180–203 (SAKKRSKSRSKERTRHRSDKRKSK) and 215–231 (RSKSKERRKSKSPSKRS). A phosphoserine mark is found at serine 240, serine 242, serine 258, serine 278, serine 292, and serine 294. The segment covering 248–271 (RSQEKVGKARSPAEEKMKSEEKGK) has biased composition (basic and acidic residues). Basic and acidic residues predominate over residues 294–303 (SPVDLRDKSK). Residues 304–315 (DRRSRSKERKSK) show a composition bias toward basic residues. Over residues 316–325 (RSEIDKEKKP) the composition is skewed to basic and acidic residues. Serine 328, serine 354, serine 356, serine 366, and serine 368 each carry phosphoserine. Positions 342–367 (PSRRPGRSPKRRSLSPKLRDKSRRSR) are enriched in basic residues. Threonine 385 is modified (phosphothreonine). Position 387 is a phosphoserine (serine 387). Basic and acidic residues-rich tracts occupy residues 395–408 (RSLERKRREPERRR) and 415–429 (RPRDDILGRCERSKD). Phosphoserine is present on residues serine 427, serine 431, and serine 437. Positions 438–497 (PTRRRSRSPIRRRSRSPLRRSRSPRRRSRSPRRRDRSRRSRSRLRRRSRSRGGHRRRSRS) are enriched in basic residues. Serine 518, serine 519, serine 520, serine 565, serine 569, serine 576, serine 578, and serine 580 each carry phosphoserine. The segment covering 518-535 (SSSDDNLEDFDVEEEDEE) has biased composition (acidic residues). A compositionally biased stretch (low complexity) spans 562–581 (SVPSEPSSPQSSTRSRSPSP). Residues lysine 593 and lysine 659 each participate in a glycyl lysine isopeptide (Lys-Gly) (interchain with G-Cter in SUMO2) cross-link. One can recognise a Protein kinase domain in the interval 687-1006 (YNVYGYTGQG…ALQHAFIQEK (320 aa)). ATP contacts are provided by residues 693–701 (TGQGVFSNV) and lysine 717. Position 717 is an N6-acetyllysine (lysine 717). Catalysis depends on aspartate 815, which acts as the Proton acceptor. Phosphotyrosine is present on tyrosine 849. Residue serine 852 is modified to Phosphoserine.

The protein belongs to the protein kinase superfamily. CMGC Ser/Thr protein kinase family. In terms of assembly, interacts with CLK1 C-terminus. Associates with the U5 snRNP and NCOR1 deacetylase complexes. Identified in the spliceosome C complex. Post-translationally, phosphorylated by CLK1. Autophosphorylated; phosphorylation inhibits interaction with its targets, such as PRPF6 or SMARCA4.

It is found in the nucleus. The protein resides in the chromosome. It localises to the centromere. The protein localises to the kinetochore. It carries out the reaction L-seryl-[protein] + ATP = O-phospho-L-seryl-[protein] + ADP + H(+). The catalysed reaction is L-threonyl-[protein] + ATP = O-phospho-L-threonyl-[protein] + ADP + H(+). Serine/threonine kinase involved in spliceosomal assembly as well as mitosis and signaling regulation. Connects chromatin mediated regulation of transcription and pre-mRNA splicing. During spliceosomal assembly, interacts with and phosphorylates PRPF6 and PRPF31, components of the U4/U6-U5 tri-small nuclear ribonucleoprotein (snRNP), to facilitate the formation of the spliceosome B complex. Plays a role in regulating transcription and the spindle assembly checkpoint (SAC). Associates with U5 snRNP and NCOR1 deacetylase complexes which may allow a coordination of pre-mRNA splicing with chromatin remodeling events involved in transcriptional regulation. Associates and probably phosphorylates SMARCA4 and NCOR1. Phosphorylates SRSF1. Associates with kinetochores during mitosis and is necessary for recruitment and maintenance of the checkpoint proteins such as MAD1L1 and MAD12L1 at the kinetochores. Phosphorylates and regulates the activity of the transcription factors such as ELK1 and KLF13. Phosphorylates nuclear YAP1 and WWTR1/TAZ which induces nuclear exclusion and regulates Hippo signaling pathway, involved in tissue growth control. This Mus musculus (Mouse) protein is Serine/threonine-protein kinase PRP4 homolog (Prp4k).